The primary structure comprises 170 residues: Putative phosphoesterase OB1230 (170 aa).

His34 functions as the Proton donor in the catalytic mechanism. 2 consecutive short sequence motifs (HXTX) follow at residues 34–37 (HLTL) and 115–118 (HITI). The active-site Proton acceptor is the His115.

The protein belongs to the 2H phosphoesterase superfamily. YjcG family.

This Oceanobacillus iheyensis (strain DSM 14371 / CIP 107618 / JCM 11309 / KCTC 3954 / HTE831) protein is Putative phosphoesterase OB1230.